Reading from the N-terminus, the 392-residue chain is Phospho-N-acetylmuramoyl-pentapeptide-transferase (392 aa).

The next 10 helical transmembrane spans lie at 24–44 (YLTF…LLAG), 76–96 (TMGG…WFDL), 100–120 (FVWV…VDDW), 137–157 (YFWQ…CISE), 193–213 (VSYP…IVGS), 225–245 (GLAI…AYVT), 262–282 (AGEL…FLWF), 289–309 (VFMG…IAII), 314–334 (IVLA…MLQV), and 369–389 (QVVV…LTTL).

This sequence belongs to the glycosyltransferase 4 family. MraY subfamily. Requires Mg(2+) as cofactor.

The protein resides in the cell inner membrane. The enzyme catalyses UDP-N-acetyl-alpha-D-muramoyl-L-alanyl-gamma-D-glutamyl-meso-2,6-diaminopimeloyl-D-alanyl-D-alanine + di-trans,octa-cis-undecaprenyl phosphate = di-trans,octa-cis-undecaprenyl diphospho-N-acetyl-alpha-D-muramoyl-L-alanyl-D-glutamyl-meso-2,6-diaminopimeloyl-D-alanyl-D-alanine + UMP. It functions in the pathway cell wall biogenesis; peptidoglycan biosynthesis. Functionally, catalyzes the initial step of the lipid cycle reactions in the biosynthesis of the cell wall peptidoglycan: transfers peptidoglycan precursor phospho-MurNAc-pentapeptide from UDP-MurNAc-pentapeptide onto the lipid carrier undecaprenyl phosphate, yielding undecaprenyl-pyrophosphoryl-MurNAc-pentapeptide, known as lipid I. The polypeptide is Phospho-N-acetylmuramoyl-pentapeptide-transferase (Paracidovorax citrulli (strain AAC00-1) (Acidovorax citrulli)).